The chain runs to 178 residues: MRTLALSLALALLCLLHTEAAATVPDRSEVAGKWYIVALASNTDFFLREKGKMKMVMARISFLGEDELEVSYAAPSPKGCRKWETTFKKTSDDGELYYSEEAEKTVEVLDTDYKSYAVIFATRVKDGRTLHMMRLYSRSREVSPTAMAIFRKLARERNYTDEMVAVLPSQEECSVDEV.

Positions 1–20 (MRTLALSLALALLCLLHTEA) are cleaved as a signal peptide. Ala-21 bears the Blocked amino end (Ala) mark. Thr-43 contributes to the enterobactin binding site. 2 residues coordinate 1-tetradecanoyl-sn-glycerol 3-phosphate: Tyr-72 and Lys-104. Cys-80 and Cys-173 are joined by a disulfide. Lys-104, Arg-123, and Arg-134 together coordinate enterobactin. 134-136 (RLY) is a 1-tetradecanoyl-sn-glycerol 3-phosphate binding site.

The protein belongs to the calycin superfamily. Lipocalin family. Monomer. Post-translationally, does not seem to be glycosylated. Expressed in egg white (at protein level). Expressed in the magnum of the oviduct (at protein level). Preferentially synthesized in nonproliferating cells.

Its subcellular location is the secreted. In terms of biological role, siderocalin-like lipocalin tightly binding a variety of bacterial ferric siderophores, also binds long-chain unsaturated fatty acids such as linoleic acid, oleic acid, arachidonic acid and, with a lower affinity, long chain saturated fatty acids such as steraic acid. May act as an antibacterial factor, through dual ligand specificity, both as a siderophore-sequestrating molecule and a lysophosphatidic acid (LPA) sensor. This is Extracellular fatty acid-binding protein (EXFABP) from Gallus gallus (Chicken).